The chain runs to 984 residues: MPPPAEVTDPSHAPAVLRQLNEQRLRGLFCDVTLIAGDTKFPAHRSVLAASSPFFREALLASAPLPLPPVTGGSAPSPATTTAASSSSSPPPPASPHSSSPPRVLELPGVPAAAFSDVLNFIYSARLALPGGGGDGAAVAEIGALGRRLGISRLQGLGEGGDTWVPPAPSSMVTSEPNEDSLGPGLRTDGGWEGDKAEPLTPDSQPRRPFPCPRCGKSFIHPKRLQTHEAQCRRGSNTRGSAGLGPGGSGPGGPAGVDASALPQPVSFRDGPEHVVKVVGGHVLYVCAACERSYVTLSSLKRHSNVHSWRRKYPCRYCEKVFALAEYRTKHEVWHTGERRYQCIFCWETFVTYYNLKTHQRAFHGISPGLLASEKTPNGGYKPKLNTLKLYRLLPMRAAKRPYKTYSQGAPEAPLSPSLHTPVPAVMPASPQPLLPSVPEPGPPHSVITFAHPAPSVIVHGSSSSGAAGGGPVGTGGSQAASVITYTTPPRPPKKREYPPPPPEPAATPTSPASTAVIPATAAGPATATEEAKGRNLRAGRTLTYTAKPVGGVSGSGGSPTGTGRGSSQLQAPPPLCQITVRIGEEAIVKRRISETDLRPGELSGEEVEESEEEEEEEEEEDQEDQEESKAGGEDQLWRPYYSYKPKRKAGATASGLSGLPRGRRPPRWRQKLERRGWEETPAVEGPGGRGRGERRHRCGDCAQAFATLRKLRKHQEAHSGGSHNSRTGRRSSTRFTCPHCAKVCKTAAALNRHGQRHAVERPGGTPTPVIAYSKGSIGTRPTDVKEEAPQEMQVSSSSGEAGGGSAAAAAAEASESASLQDPVISGGEEPPVAGGGGYVYPPVQEFPLALIGGSRDPGAGKGKPGNEGPVGASEGNRMEEMGTAKVTFYPEPYPLVYGPQLLAAYPYNFSNLAALPVALNMVLPDEKGGGALPFLPGVFGYAVNPQTAPPTPPTPPPPLPLPVPPKGVGEMTGVERTQKGDVG.

A BTB domain is found at 30–131 (CDVTLIAGDT…IYSARLALPG (102 aa)). Lys40 participates in a covalent cross-link: Glycyl lysine isopeptide (Lys-Gly) (interchain with G-Cter in SUMO2). 3 disordered regions span residues 71 to 104 (TGGS…PPRV), 172 to 210 (MVTS…RRPF), and 227 to 262 (THEA…ASAL). The segment covering 74–88 (SAPSPATTTAASSSS) has biased composition (low complexity). Residues 165–324 (VPPAPSSMVT…CRYCEKVFAL (160 aa)) form an interaction with CBFA2T3 region. Residues 210–232 (FPCPRCGKSFIHPKRLQTHEAQC) form a C2H2-type 1; atypical zinc finger. Residues 242–255 (AGLGPGGSGPGGPA) show a composition bias toward gly residues. C2H2-type zinc fingers lie at residues 285 to 307 (YVCA…SNVH), 313 to 335 (YPCR…EVWH), and 341 to 364 (YQCI…RAFH). At Ser367 the chain carries Phosphoserine. Residues 461–575 (GSSSSGAAGG…GSSQLQAPPP (115 aa)) are disordered. A compositionally biased stretch (gly residues) spans 467-477 (AAGGGPVGTGG). 2 stretches are compositionally biased toward low complexity: residues 478-488 (SQAASVITYTT) and 507-529 (ATPT…ATAT). A Glycyl lysine isopeptide (Lys-Gly) (interchain with G-Cter in SUMO2) cross-link involves residue Lys548. The span at 552–565 (GVSGSGGSPTGTGR) shows a compositional bias: gly residues. Residue Lys590 forms a Glycyl lysine isopeptide (Lys-Gly) (interchain with G-Cter in SUMO2) linkage. Disordered regions lie at residues 593–696 (ISET…GERR), 713–734 (RKHQ…RSST), 756–836 (QRHA…VAGG), 853–876 (GGSR…ASEG), and 947–984 (QTAP…GDVG). The span at 604–627 (SGEEVEESEEEEEEEEEEDQEDQE) shows a compositional bias: acidic residues. Residues 628–637 (ESKAGGEDQL) are compositionally biased toward basic and acidic residues. 2 C2H2-type zinc fingers span residues 697–719 (HRCG…QEAH) and 736–758 (FTCP…GQRH). Thr766 and Thr768 each carry phosphothreonine; by HIPK2. Positions 807 to 819 (AAAAAAEASESAS) are enriched in low complexity. The segment covering 948 to 966 (TAPPTPPTPPPPLPLPVPP) has biased composition (pro residues). Position 955 is a phosphothreonine; by HIPK2 (Thr955).

As to quaternary structure, interacts with HIPK2. Interacts with CBFA2T3. Interacts with ZBTB38. Phosphorylated by HIPK2. This phosphorylation reduces stability and triggers ZBTB4 protein degradation in response to DNA damage.

Its subcellular location is the nucleus. The protein localises to the chromosome. In terms of biological role, transcriptional repressor with bimodal DNA-binding specificity. Represses transcription in a methyl-CpG-dependent manner. Binds with a higher affinity to methylated CpG dinucleotides in the consensus sequence 5'-CGCG-3' but can also bind to the non-methylated consensus sequence 5'-CTGCNA-3' also known as the consensus kaiso binding site (KBS). Can also bind specifically to a single methyl-CpG pair and can bind hemimethylated DNA but with a lower affinity compared to methylated DNA. Plays a role in postnatal myogenesis, may be involved in the regulation of satellite cells self-renewal. In Rattus norvegicus (Rat), this protein is Zinc finger and BTB domain-containing protein 4 (Zbtb4).